We begin with the raw amino-acid sequence, 626 residues long: MADQRMDISSTISDFMSPGATDLLSSPLGTSGMDCNRKRKGSSTDYQESMDTDKDDPHGRLEYTEHQGRIKNAREAHSQIEKRRRDKMNSFIDELASLVPTCNAMSRKLDKLTVLRMAVQHMKTLRGATNPYTEANYKPTFLSDDELKHLILRAADGFLFVVGCDRGKILFVSESVFKILNYSQNDLIGQSLFDYLHPKDIAKVKEQLSSSDTAPRERLIDAKTGLPVKTDITPGPSRLCSGARRSFFCRMKCNRPSVKVEDKDFPSTCSKKKADRKSFCTIHSTGYLKSWPPTKMGLDEDNEPDNEGCNLSCLVAIGRLHSHVVPQPVNGEIRVKSMEYVSRHAIDGKFVFVDQRATAILAYLPQELLGTSCYEYFHQDDIGHLAECHRQVLQTREKITTNCYKFKIKDGSFITLRSRWFSFMNPWTKEVEYIVSTNTVVLANVLEGGDPTFPQLTASPHSMDSMLPSGEGGPKRTHPTVPGIPGGTRAGAGKIGRMIAEEVMEIHRIRGSSPSSCGSSPLNITSTPPPDASSPGGKKILNGGTPDIPSSGLPPGQAQENPGYPYSDSSSILGENPHIGIDMIDNDQGSSSPSNDEAAMAVIMSLLEADAGLGGPVDFSDLPWPL.

The tract at residues Met-1–Arg-60 is disordered. Ser-17 carries the post-translational modification Phosphoserine; by GSK3-beta. Residue Thr-21 is modified to Phosphothreonine; by GSK3-beta. The short motif at Asn-36–Gly-41 is the Nuclear localization signal element. Residues Asp-51–Arg-60 show a composition bias toward basic and acidic residues. Positions Asn-72–Leu-125 constitute a bHLH domain. Ser-78 carries the phosphoserine modification. Position 90 is a phosphoserine; by CK2 (Ser-90). The Nuclear export signal 1 signature appears at Leu-142–Leu-152. The PAS 1 domain maps to Ser-143 to Pro-215. Lys-252 participates in a covalent cross-link: Glycyl lysine isopeptide (Lys-Gly) (interchain with G-Cter in SUMO2 and SUMO3). Lys-259 is covalently cross-linked (Glycyl lysine isopeptide (Lys-Gly) (interchain with G-Cter in SUMO); alternate). Lys-259 is covalently cross-linked (Glycyl lysine isopeptide (Lys-Gly) (interchain with G-Cter in SUMO2); alternate). A PAS 2 domain is found at Pro-326–Arg-396. The Nuclear export signal 2 signature appears at Leu-361–Leu-369. The PAC domain maps to Thr-401–Asn-444. Disordered stretches follow at residues Thr-457–Gly-493 and Arg-510–Glu-597. Over residues Ile-484–Gly-493 the composition is skewed to gly residues. The tract at residues Arg-508–Gln-588 is interaction with CIART. Positions Gly-511–Pro-521 are enriched in low complexity. Position 538 is an N6-acetyllysine (Lys-538).

Component of the circadian clock oscillator which includes the CRY1/2 proteins, CLOCK or NPAS2, BMAL1 or BMAL2, CSNK1D and/or CSNK1E, TIMELESS and the PER1/2/3 proteins. Forms a heterodimer with CLOCK. The CLOCK-BMAL1 heterodimer is required for E-box-dependent transactivation, for CLOCK nuclear translocation and degradation, and, for phosphorylation of both CLOCK and BMAL1. Part of a nuclear complex which also includes RACK1 and PRKCA; RACK1 and PRKCA are recruited to the complex in a circadian manner. Interacts with NPAS2. Interacts with EZH2. Interacts with SUMO3. Interacts with SIRT1. Interacts with AHR. Interacts with ID1, ID2 and ID3. Interacts with DDX4. Interacts with OGT. Interacts with EED and SUZ12. Interacts with MTA1. Interacts with CIART. Interacts with HSP90. Interacts with KAT2B and EP300. Interacts with BHLHE40/DEC1 and BHLHE41/DEC2. Interacts with RELB and the interaction is enhanced in the presence of CLOCK. Interacts with PER1, PER2, CRY1 and CRY2 and this interaction requires a translocation to the nucleus. Interaction of the CLOCK-BMAL1 heterodimer with PER or CRY inhibits transcription activation. Interaction of the CLOCK-BMAL1 with CRY1 is independent of DNA but with PER2 is off DNA. The CLOCK-BMAL1 heterodimer interacts with GSK3B. Interacts with KDM5A. Interacts with KMT2A; in a circadian manner. Interacts with UBE3A. Interacts with PRKCG. Interacts with MAGEL2. Interacts with NCOA2. Interacts with THRAP3. The CLOCK-BMAL1 heterodimer interacts with PASD1. Interacts with PASD1. Interacts with USP9X. Interacts with PIWIL2 (via PIWI domain). Interacts with HDAC3. Interacts with HNF4A. In terms of processing, ubiquitinated, leading to its proteasomal degradation. Deubiquitinated by USP9X. Post-translationally, O-glycosylated; contains O-GlcNAc. O-glycosylation by OGT prevents protein degradation by inhibiting ubiquitination. It also stabilizes the CLOCK-BMAL1 heterodimer thereby increasing CLOCK-BMAL1-mediated transcription of genes in the negative loop of the circadian clock such as PER1/2/3 and CRY1/2. Acetylated on Lys-538 by CLOCK during the repression phase of the circadian cycle. Acetylation facilitates recruitment of CRY1 protein and initiates the repression phase of the circadian cycle. Acetylated at Lys-538 by KAT5 during the activation phase of the cycle, leading to recruitment of the positive transcription elongation factor b (P-TEFb) and BRD4, followed by productive elongation of circadian transcripts. Deacetylated by SIRT1, which may result in decreased protein stability. In terms of processing, phosphorylated upon dimerization with CLOCK. Phosphorylation enhances the transcriptional activity, alters the subcellular localization and decreases the stability of the CLOCK-BMAL1 heterodimer by promoting its degradation. Phosphorylation shows circadian variations in the liver with a peak between CT10 to CT14. Phosphorylation at Ser-90 by CK2 is essential for its nuclear localization, its interaction with CLOCK and controls CLOCK nuclear entry. Dephosphorylation at Ser-78 is important for dimerization with CLOCK and transcriptional activity. Post-translationally, sumoylated on Lys-259 upon dimerization with CLOCK. Predominantly conjugated to poly-SUMO2/3 rather than SUMO1 and the level of these conjugates undergo rhythmic variation, peaking at CT9-CT12. Sumoylation localizes it exclusively to the PML body and promotes its ubiquitination in the PML body, ubiquitin-dependent proteasomal degradation and the transcriptional activity of the CLOCK-BMAL1 heterodimer. Undergoes lysosome-mediated degradation in a time-dependent manner in the liver.

It localises to the nucleus. The protein localises to the cytoplasm. The protein resides in the PML body. In terms of biological role, transcriptional activator which forms a core component of the circadian clock. The circadian clock, an internal time-keeping system, regulates various physiological processes through the generation of approximately 24 hour circadian rhythms in gene expression, which are translated into rhythms in metabolism and behavior. It is derived from the Latin roots 'circa' (about) and 'diem' (day) and acts as an important regulator of a wide array of physiological functions including metabolism, sleep, body temperature, blood pressure, endocrine, immune, cardiovascular, and renal function. Consists of two major components: the central clock, residing in the suprachiasmatic nucleus (SCN) of the brain, and the peripheral clocks that are present in nearly every tissue and organ system. Both the central and peripheral clocks can be reset by environmental cues, also known as Zeitgebers (German for 'timegivers'). The predominant Zeitgeber for the central clock is light, which is sensed by retina and signals directly to the SCN. The central clock entrains the peripheral clocks through neuronal and hormonal signals, body temperature and feeding-related cues, aligning all clocks with the external light/dark cycle. Circadian rhythms allow an organism to achieve temporal homeostasis with its environment at the molecular level by regulating gene expression to create a peak of protein expression once every 24 hours to control when a particular physiological process is most active with respect to the solar day. Transcription and translation of core clock components (CLOCK, NPAS2, BMAL1, BMAL2, PER1, PER2, PER3, CRY1 and CRY2) plays a critical role in rhythm generation, whereas delays imposed by post-translational modifications (PTMs) are important for determining the period (tau) of the rhythms (tau refers to the period of a rhythm and is the length, in time, of one complete cycle). A diurnal rhythm is synchronized with the day/night cycle, while the ultradian and infradian rhythms have a period shorter and longer than 24 hours, respectively. Disruptions in the circadian rhythms contribute to the pathology of cardiovascular diseases, cancer, metabolic syndromes and aging. A transcription/translation feedback loop (TTFL) forms the core of the molecular circadian clock mechanism. Transcription factors, CLOCK or NPAS2 and BMAL1 or BMAL2, form the positive limb of the feedback loop, act in the form of a heterodimer and activate the transcription of core clock genes and clock-controlled genes (involved in key metabolic processes), harboring E-box elements (5'-CACGTG-3') within their promoters. The core clock genes: PER1/2/3 and CRY1/2 which are transcriptional repressors form the negative limb of the feedback loop and interact with the CLOCK|NPAS2-BMAL1|BMAL2 heterodimer inhibiting its activity and thereby negatively regulating their own expression. This heterodimer also activates nuclear receptors NR1D1, NR1D2, RORA, RORB and RORG, which form a second feedback loop and which activate and repress BMAL1 transcription, respectively. BMAL1 positively regulates myogenesis and negatively regulates adipogenesis via the transcriptional control of the genes of the canonical Wnt signaling pathway. Plays a role in normal pancreatic beta-cell function; regulates glucose-stimulated insulin secretion via the regulation of antioxidant genes NFE2L2/NRF2 and its targets SESN2, PRDX3, CCLC and CCLM. Negatively regulates the mTORC1 signaling pathway; regulates the expression of MTOR and DEPTOR. Controls diurnal oscillations of Ly6C inflammatory monocytes; rhythmic recruitment of the PRC2 complex imparts diurnal variation to chemokine expression that is necessary to sustain Ly6C monocyte rhythms. Regulates the expression of HSD3B2, STAR, PTGS2, CYP11A1, CYP19A1 and LHCGR in the ovary and also the genes involved in hair growth. Plays an important role in adult hippocampal neurogenesis by regulating the timely entry of neural stem/progenitor cells (NSPCs) into the cell cycle and the number of cell divisions that take place prior to cell-cycle exit. Regulates the circadian expression of CIART. The CLOCK-BMAL1 heterodimer regulates the circadian expression of SERPINE1/PAI1, VWF, B3, CCRN4L/NOC, NAMPT, DBP, MYOD1, PPARGC1A, PPARGC1B, SIRT1, GYS2, F7, NGFR, GNRHR, BHLHE40/DEC1, ATF4, MTA1 and also genes implicated in glucose and lipid metabolism. Promotes rhythmic chromatin opening, regulating the DNA accessibility of other transcription factors. The NPAS2-BMAL1 heterodimer positively regulates the expression of MAOA, F7 and LDHA and modulates the circadian rhythm of daytime contrast sensitivity by regulating the rhythmic expression of adenylate cyclase type 1 (ADCY1) in the retina. The preferred binding motif for the CLOCK-BMAL1 heterodimer is 5'-CACGTGA-3', which contains a flanking adenine nucleotide at the 3-prime end of the canonical 6-nucleotide E-box sequence. CLOCK specifically binds to the half-site 5'-CAC-3', while BMAL1 binds to the half-site 5'-GTGA-3'. The CLOCK-BMAL1 heterodimer also recognizes the non-canonical E-box motifs 5'-AACGTGA-3' and 5'-CATGTGA-3'. Essential for the rhythmic interaction of CLOCK with ASS1 and plays a critical role in positively regulating CLOCK-mediated acetylation of ASS1. Plays a role in protecting against lethal sepsis by limiting the expression of immune checkpoint protein CD274 in macrophages in a PKM2-dependent manner. Regulates the diurnal rhythms of skeletal muscle metabolism via transcriptional activation of genes promoting triglyceride synthesis (DGAT2) and metabolic efficiency (COQ10B). The protein is Basic helix-loop-helix ARNT-like protein 1 (BMAL1) of Equus caballus (Horse).